The following is an 819-amino-acid chain: LPS-assembly protein LptD (819 aa).

The signal sequence occupies residues 1–33 (MRQMKYQFKFNPLAAAIFTLLCGGSMQSSYADA).

This sequence belongs to the LptD family. As to quaternary structure, component of the lipopolysaccharide transport and assembly complex. Interacts with LptE and LptA.

The protein resides in the cell outer membrane. Functionally, together with LptE, is involved in the assembly of lipopolysaccharide (LPS) at the surface of the outer membrane. This Acinetobacter baylyi (strain ATCC 33305 / BD413 / ADP1) protein is LPS-assembly protein LptD.